Consider the following 513-residue polypeptide: Protein CYCLOPS (513 aa).

Disordered regions lie at residues 329 to 380 (QGRT…STQN) and 395 to 435 (DDRK…AEAK). A compositionally biased stretch (low complexity) spans 333–347 (ASGEPSQSESSAAAP). Polar residues predominate over residues 359–380 (PSNSNQTLGDSSWKQVGESTQN). 2 consecutive short sequence motifs (nuclear localization signal) follow at residues 397 to 400 (RKRK) and 421 to 424 (KKRR). Residues 447-513 (MQAILKRCEN…ERILSETGKI (67 aa)) are a coiled coil.

The protein belongs to the CYCLOPS family. In terms of assembly, forms homodimers. Interacts with CCAMK. As to expression, highly expressed in roots. Expressed in root hairs and nodules. Not detected in leaves or flowers.

It localises to the nucleus. Functionally, involved symbiotic signaling. Required for root infection by symbiotic rhizobia, infection thread (IT) formation, and nodule development. Required for proper induction of early nodulin gene expression. Probably not involved in nodule organogenesis. Involved in arbuscular mycorrhizal (AM) symbiosis. Required for fungal infection of the outer cortical cell layers, and for arbuscule development during the AM symbiosis. Acts downstream of CCAMK. Required for symbiosome formation (i.e. the release of the bacteria from the ITs) and subsequent symbiosome development. Required for the expression of the nodule-specific RPG gene, which controls proper IT growth and is essential for symbiosome formation. Acts upstream of ERN1, a transcriptional regulator required for nodulation. This is Protein CYCLOPS from Medicago truncatula (Barrel medic).